The primary structure comprises 333 residues: Tubulin alpha chain (333 aa).

GTP contacts are provided by Ser48, Gly52, Thr53, Thr88, Asn115, and Asn137.

It belongs to the tubulin family. As to quaternary structure, dimer of alpha and beta chains. A typical microtubule is a hollow water-filled tube with an outer diameter of 25 nm and an inner diameter of 15 nM. Alpha-beta heterodimers associate head-to-tail to form protofilaments running lengthwise along the microtubule wall with the beta-tubulin subunit facing the microtubule plus end conferring a structural polarity. Microtubules usually have 13 protofilaments but different protofilament numbers can be found in some organisms and specialized cells. Requires Mg(2+) as cofactor. Post-translationally, undergoes a tyrosination/detyrosination cycle, the cyclic removal and re-addition of a C-terminal tyrosine residue by the enzymes tubulin tyrosine carboxypeptidase (TTCP) and tubulin tyrosine ligase (TTL), respectively.

It localises to the cytoplasm. Its subcellular location is the cytoskeleton. The enzyme catalyses GTP + H2O = GDP + phosphate + H(+). Its function is as follows. Tubulin is the major constituent of microtubules, a cylinder consisting of laterally associated linear protofilaments composed of alpha- and beta-tubulin heterodimers. Microtubules grow by the addition of GTP-tubulin dimers to the microtubule end, where a stabilizing cap forms. Below the cap, tubulin dimers are in GDP-bound state, owing to GTPase activity of alpha-tubulin. In Dictyostelium purpureum (Slime mold), this protein is Tubulin alpha chain (tuba).